The chain runs to 276 residues: Putative ABC transporter ATP-binding protein MA_4021 (276 aa).

Positions 5–247 constitute an ABC transporter domain; that stretch reads FDLKNISYSY…DLNLLLSTNL (243 aa). 38 to 45 serves as a coordination point for ATP; that stretch reads GSNGSGKS.

The protein belongs to the ABC transporter superfamily.

The protein resides in the cell membrane. Its function is as follows. Probably part of an ABC transporter complex. Responsible for energy coupling to the transport system. This Methanosarcina acetivorans (strain ATCC 35395 / DSM 2834 / JCM 12185 / C2A) protein is Putative ABC transporter ATP-binding protein MA_4021.